The following is a 338-amino-acid chain: Serpentine receptor class alpha-32 (338 aa).

The next 7 membrane-spanning stretches (helical) occupy residues 30-50, 63-83, 120-140, 152-172, 199-219, 249-269, and 289-309; these read VYVIYIDLVLILALFLSIHAI, ITHLLIASLVYGNVHNASYTI, RFLFIAIELALNVDRIIVILF, GEILNILAVILSFALGCLLHL, LTSYTILSACCAALDFLMMWY, LNSLLQLFVTSIYAISMFVLA, and TTPYSTLLVPIQIKVFIQWIG.

Belongs to the nematode receptor-like protein sra family.

It is found in the membrane. This is Serpentine receptor class alpha-32 (sra-32) from Caenorhabditis elegans.